The chain runs to 781 residues: Mitochondrial inner membrane m-AAA protease component paraplegin (781 aa).

The transit peptide at 1-43 (MAAALLLLRGLRPGPEPRPRRLWGLLSGRGPGLSSGAGARRPY) directs the protein to the mitochondrion. Disordered regions lie at residues 22 to 56 (LWGLLSGRGPGLSSGAGARRPYAARGTPVGPAAAG) and 103 to 135 (TSRMKQKNKDNDKPKGKTPEDDEEEKRRKERED). The segment covering 36–56 (GAGARRPYAARGTPVGPAAAG) has biased composition (low complexity). The propeptide at 44–105 (AARGTPVGPA…GSTLYFNTSR (62 aa)) is removed in mature form. Residues 106 to 144 (MKQKNKDNDKPKGKTPEDDEEEKRRKEREDQMYRERLRT) are Mitochondrial matrix-facing. The segment covering 109-135 (KNKDNDKPKGKTPEDDEEEKRRKERED) has biased composition (basic and acidic residues). Residues 145–165 (LFIIALVMSLLNSLSTSGGSI) traverse the membrane as a helical segment. The Mitochondrial intermembrane portion of the chain corresponds to 166–248 (SWADFVNEML…DRIPVSYKRT (83 aa)). Residues 249–269 (GFFGNALYALGMTAVGLAILW) form a helical membrane-spanning segment. Topologically, residues 270-781 (YVFRLAGMTG…ASGEEEAPAP (512 aa)) are mitochondrial matrix. Residues alanine 312, glycine 352, cysteine 353, glycine 354, lysine 355, threonine 356, and leucine 357 each contribute to the ATP site. Tyrosine 505 carries the 3'-nitrotyrosine modification. Zn(2+) is bound at residue histidine 574. Glutamate 575 is a catalytic residue. Residues histidine 578 and aspartate 650 each coordinate Zn(2+). An interaction with PPIF region spans residues 701-781 (HEAKLLVAKA…ASGEEEAPAP (81 aa)).

The protein in the N-terminal section; belongs to the AAA ATPase family. It in the C-terminal section; belongs to the peptidase M41 family. In terms of assembly, forms heterohexamers with SPG7 and AFG3L1. The m-AAA protease is either composed of homohexamers of AFG3L2 or heterohexamers of AFG3L1, AFG3L2 and/or SPG7. Component of the mitochondrial permeability transition pore complex (mPTPC), at least composed of SPG7, VDAC1 and PPIF. Interacts with MAIP1. Zn(2+) is required as a cofactor. Post-translationally, upon import into the mitochondrion, the N-terminal transit peptide is cleaved by the mitochondrial-processing peptidase (MPP) to generate an intermediate form which undergoes a second proteolytic cleavage mediated by proteases AFG3L1 and/or AFG3L2 removing an additional N-terminal fragment to generate the proteolytically active mature form. As to expression, expressed in the brain and retina (at protein level).

The protein localises to the mitochondrion inner membrane. The enzyme catalyses ATP + H2O = ADP + phosphate + H(+). In terms of biological role, catalytic component of the m-AAA protease, a protease that plays a key role in proteostasis of inner mitochondrial membrane proteins, and which is essential for axonal and neuron development. SPG7 possesses both ATPase and protease activities: the ATPase activity is required to unfold substrates, threading them into the internal proteolytic cavity for hydrolysis into small peptide fragments. The m-AAA protease exerts a dual role in the mitochondrial inner membrane: it mediates the processing of specific regulatory proteins and ensures protein quality control by degrading misfolded polypeptides. Mediates protein maturation of the mitochondrial ribosomal subunit MRPL32/bL32m by catalyzing the cleavage of the presequence of MRPL32/bL32m prior to assembly into the mitochondrial ribosome. Acts as a regulator of calcium in neurons by mediating degradation of SMDT1/EMRE before its assembly with the uniporter complex, limiting the availability of SMDT1/EMRE for MCU assembly and promoting efficient assembly of gatekeeper subunits with MCU. Also regulates mitochondrial calcium by catalyzing degradation of MCU. Plays a role in the formation and regulation of the mitochondrial permeability transition pore (mPTP) and its proteolytic activity is dispensable for this function. This Mus musculus (Mouse) protein is Mitochondrial inner membrane m-AAA protease component paraplegin.